The following is a 177-amino-acid chain: Large ribosomal subunit protein uL6 (177 aa).

The segment at 157-177 is disordered; sequence YKGKGVRYAGEKVRRKEGKKK.

The protein belongs to the universal ribosomal protein uL6 family. Part of the 50S ribosomal subunit.

In terms of biological role, this protein binds to the 23S rRNA, and is important in its secondary structure. It is located near the subunit interface in the base of the L7/L12 stalk, and near the tRNA binding site of the peptidyltransferase center. The chain is Large ribosomal subunit protein uL6 from Caulobacter vibrioides (strain ATCC 19089 / CIP 103742 / CB 15) (Caulobacter crescentus).